A 468-amino-acid polypeptide reads, in one-letter code: UDP-N-acetylmuramate--L-alanine ligase (468 aa).

Residue 121–127 (GSHGKTT) participates in ATP binding.

Belongs to the MurCDEF family.

The protein localises to the cytoplasm. The enzyme catalyses UDP-N-acetyl-alpha-D-muramate + L-alanine + ATP = UDP-N-acetyl-alpha-D-muramoyl-L-alanine + ADP + phosphate + H(+). It participates in cell wall biogenesis; peptidoglycan biosynthesis. Cell wall formation. The polypeptide is UDP-N-acetylmuramate--L-alanine ligase (Borreliella burgdorferi (strain ATCC 35210 / DSM 4680 / CIP 102532 / B31) (Borrelia burgdorferi)).